A 473-amino-acid chain; its full sequence is H(+)/Cl(-) exchange transporter ClcA (473 aa).

At 1-32 (MKTDTPSLETPQAARLRRRQLIRQLLERDKTP) the chain is on the cytoplasmic side. The chain crosses the membrane as a helical span at residues 33–69 (LAILFMAAVVGTLVGLAAVAFDKGVAWLQNQRMGALV). Residues 70–76 (HTADNYP) are Periplasmic-facing. The chain crosses the membrane as a helical span at residues 77-100 (LLLTVAFLCSAVLAMFGYFLVRKY). A Selectivity filter part_1 motif is present at residues 106–110 (GSGIP). S107 provides a ligand contact to chloride. The helical intramembrane region spans 109–116 (IPEIEGAL). The Cytoplasmic portion of the chain corresponds to 117–123 (EDQRPVR). The next 2 membrane-spanning stretches (helical) occupy residues 124 to 141 (WWRVLPVKFFGGLGTLGG) and 148 to 166 (EGPTVQIGGNISRMVLDIF). Residues 146 to 150 (GREGP) carry the Selectivity filter part_2 motif. Topologically, residues 167–176 (RLKGDEARHT) are cytoplasmic. 2 consecutive intramembrane regions (helical) follow at residues 177-189 (LLATGAAAGLAAA) and 193-201 (PLAGILFII). Topologically, residues 202–214 (EEMRPQFRYTLIS) are cytoplasmic. The helical transmembrane segment at 215 to 232 (IKAVFIGVIMSTIMYRIF) threads the bilayer. The Periplasmic portion of the chain corresponds to 233–252 (NHEVALIDVGKLSDAPLNTL). A helical membrane pass occupies residues 253–281 (WLYLILGIIFGIFGPIFNKWVLGMQDLLH). The Cytoplasmic segment spans residues 282–287 (RVHGGN). The helical transmembrane segment at 288–309 (ITKWVLMGGAIGGLCGLLGFVA) threads the bilayer. The Periplasmic portion of the chain corresponds to 310-329 (PATSGGGFNLIPIATAGNFS). 2 helical membrane passes run 330–349 (MGMLVFIFVARVITTLLCFS) and 355–376 (GIFAPMLALGTVLGTAFGMVAV). The short motif at 355–359 (GIFAP) is the Selectivity filter part_3 element. I356 and F357 together coordinate chloride. At 377-386 (ELFPQYHLEA) the chain is on the periplasmic side. Residues 387 to 401 (GTFAIAGMGALLAAS) constitute an intramembrane region (helical). Residues 402–404 (IRA) constitute an intramembrane region (note=Loop between two helices). An intramembrane region (helical) is located at residues 405-416 (PLTGIILVLEMT). The note=Loop between two helices intramembrane region spans 417-421 (DNYQL). Residues 422–438 (ILPMIITGLGATLLAQF) traverse the membrane as a helical segment. The Cytoplasmic segment spans residues 439 to 473 (TGGKPLYSAILARTLAKQEAEQLARSKAASASENT). Residue Y445 coordinates chloride.

This sequence belongs to the chloride channel (TC 2.A.49) family. ClcA subfamily. As to quaternary structure, homodimer.

The protein localises to the cell inner membrane. It carries out the reaction 2 chloride(in) + H(+)(out) = 2 chloride(out) + H(+)(in). In terms of biological role, proton-coupled chloride transporter. Functions as antiport system and exchanges two chloride ions for 1 proton. Probably acts as an electrical shunt for an outwardly-directed proton pump that is linked to amino acid decarboxylation, as part of the extreme acid resistance (XAR) response. This chain is H(+)/Cl(-) exchange transporter ClcA, found in Shigella flexneri serotype 5b (strain 8401).